Reading from the N-terminus, the 295-residue chain is Probable intramembrane protease C25B8.17 (295 aa).

Residues 1–21 traverse the membrane as a helical segment; the sequence is MEGVILASSALFTVYIGAKWS. The Cytoplasmic portion of the chain corresponds to 22 to 35; it reads AQEEEPEEKQLINK. A helical membrane pass occupies residues 36 to 56; the sequence is RLAVLFPIFGGVTLVLMYLAL. Residues 57–63 are Lumenal-facing; that stretch reads RYLSKEY. The helical transmembrane segment at 64-84 threads the bilayer; the sequence is IQLILQGYASLASIICFVRSF. Topologically, residues 85–89 are cytoplasmic; it reads NPKTT. The chain crosses the membrane as a helical span at residues 90–106; that stretch reads FGKITATMSSIAIALFY. At 107–111 the chain is on the lumenal side; that stretch reads FKTKH. Residues 112–130 traverse the membrane as a helical segment; sequence WMASNILAWALAANSISIM. The Cytoplasmic segment spans residues 131-139; sequence RIDSYNTGA. A helical transmembrane segment spans residues 140–160; that stretch reads LLLGALFFYDIYFVFGTEVMV. Asp149 is a catalytic residue. Residues 161–183 lie on the Lumenal side of the membrane; that stretch reads TVATGIDIPAKYVLPQFKNPTRL. A helical transmembrane segment spans residues 184–204; sequence SMLGLGDIVMPGLMLALMYRF. Residue Asp190 is part of the active site. The Cytoplasmic segment spans residues 205–221; it reads DLHYYINSTSQPKKHST. A helical membrane pass occupies residues 222 to 244; that stretch reads YFRNTFIAYGLGLGVTNFALYYF. Residues 245–249 lie on the Lumenal side of the membrane; the sequence is KAAQP. Residues 249–251 carry the PAL motif; that stretch reads PAL. A helical membrane pass occupies residues 250-268; the sequence is ALLYLSPACIVAPLLTAWY. Topologically, residues 269–295 are cytoplasmic; the sequence is RDELKTLFSFRSETEDETDEQDKCKST.

Belongs to the peptidase A22B family.

The protein resides in the endoplasmic reticulum membrane. The protein localises to the golgi apparatus membrane. The polypeptide is Probable intramembrane protease C25B8.17 (Schizosaccharomyces pombe (strain 972 / ATCC 24843) (Fission yeast)).